Here is a 361-residue protein sequence, read N- to C-terminus: Serine/threonine-protein kinase SAPK9 (361 aa).

The Protein kinase domain occupies 22–278 (YELVKEIGSG…MPEIKNHPWF (257 aa)). ATP is bound by residues 28–36 (IGSGNFGVA) and Lys-51. The Proton acceptor role is filled by Asp-141.

This sequence belongs to the protein kinase superfamily. Ser/Thr protein kinase family. Interacts with BZIP46. In terms of processing, may be phosphorylated. In terms of tissue distribution, expressed in leaf sheaths and roots. Expressed in shoots of young seedlings.

It localises to the cytoplasm. Its subcellular location is the nucleus. The enzyme catalyses L-seryl-[protein] + ATP = O-phospho-L-seryl-[protein] + ADP + H(+). It carries out the reaction L-threonyl-[protein] + ATP = O-phospho-L-threonyl-[protein] + ADP + H(+). Activated by hyperosmotic stress and abscisic acid (ABA). Functionally, may play a role in signal transduction of hyperosmotic response. Can phosphorylate BZIP46 in vitro. The polypeptide is Serine/threonine-protein kinase SAPK9 (SAPK9) (Oryza sativa subsp. japonica (Rice)).